The primary structure comprises 489 residues: Membrane-bound acylglycerophosphatidylinositol O-acyltransferase frj (489 aa).

3 helical membrane passes run 2-22 (SIDD…GSYV), 40-60 (VLVV…SLAL), and 75-95 (LVTF…DFYF). Catalysis depends on residues N331 and H364. 2 helical membrane passes run 405–425 (VIFW…FLLS) and 433–453 (FYSS…ALGF).

The protein belongs to the membrane-bound acyltransferase family.

It is found in the membrane. The catalysed reaction is a 1-acyl-sn-glycero-3-phospho-(1D-myo-inositol) + (5Z,8Z,11Z,14Z)-eicosatetraenoyl-CoA = a 1-acyl-2-(5Z,8Z,11Z,14Z-eicosatetraenoyl)-sn-glycero-3-phospho-(1D-myo-inositol) + CoA. The enzyme catalyses a 1-acyl-sn-glycero-3-phosphocholine + an acyl-CoA = a 1,2-diacyl-sn-glycero-3-phosphocholine + CoA. It carries out the reaction (9Z)-hexadecenoyl-CoA + 1-hexadecanoyl-sn-glycero-3-phosphocholine = 1-hexadecanoyl-2-(9Z-hexadecenoyl)-sn-glycero-3-phosphocholine + CoA. It catalyses the reaction a 1-acyl-sn-glycero-3-phospho-L-serine + an acyl-CoA = a 1,2-diacyl-sn-glycero-3-phospho-L-serine + CoA. The catalysed reaction is 1-(9Z-octadecenoyl)-sn-glycero-3-phospho-L-serine + (9Z)-hexadecenoyl-CoA = 1-(9Z-octadecenoyl)-2-(9Z-hexadecenoyl)-sn-glycero-3-phospho-L-serine + CoA. The enzyme catalyses a 1-acyl-sn-glycero-3-phosphoethanolamine + an acyl-CoA = a 1,2-diacyl-sn-glycero-3-phosphoethanolamine + CoA. It carries out the reaction 1-hexadecanoyl-sn-glycero-3-phosphoethanolamine + (9Z)-hexadecenoyl-CoA = 1-hexadecanoyl-2-(9Z)-hexadecenoyl-sn-glycero-3-phosphoethanolamine + CoA. Its pathway is lipid metabolism; phospholipid metabolism. Acyltransferase that mediates the acylation of lysophospholipids to produce phospholipids (glycerophospholipids). Highest activity with lysophosphatidylinositol (1-acyl-sn-glycero-3-phospho-(1D-myo-inositol) or LPI) producing phosphatidylinositol (1,2-diacyl-sn-glycero-3-phospho-(1D-myo-inositol) or PI) (LPIAT activity), but also converts lysophosphatidylcholine (1-acyl-sn-glycero-3-phosphocholine or LPC) to phosphatidylcholine (1,2-diacyl-sn-glycero-3-phosphocholine or PC) (LPCAT activity), lysophosphatidylserine (1-acyl-2-hydroxy-sn-glycero-3-phospho-L-serine or LPS) to phosphatidylserine (1,2-diacyl-sn-glycero-3-phospho-L-serine or PS) (LPSAT activity), and lysophosphatidylethanolamine (1-acyl-sn-glycero-3-phosphoethanolamine or LPE) producing phosphatidylethanolamine (1,2-diacyl-sn-glycero-3-phosphoethanolamine or PE) (LPEAT activity). Has a preference for unsaturated fatty acid arachidonoyl-CoA ((5Z,8Z,11Z,14Z)-eicosatetraenoyl-CoA). Glycerophospholipids are important structural and functional components of cellular membrane, acyl-chain remodeling regulates the molecular species distribution of glycerophospholipids which can affect membrane fluidity and curvature. This chain is Membrane-bound acylglycerophosphatidylinositol O-acyltransferase frj, found in Drosophila melanogaster (Fruit fly).